Reading from the N-terminus, the 474-residue chain is Mitochondrial import inner membrane translocase subunit TIM44-1 (474 aa).

Residues 1 to 54 (MAIRKIIRDLLITKQPLLRQLFHQRVLRANARSEFLPAIGYTSHRRFSVFTEFS) constitute a mitochondrion transit peptide. Residues 68–88 (ERTVKELKERTEEFKGVTEDL) are a coiled coil. Positions 132–143 (VKESFKLGKEEN) are enriched in basic and acidic residues. Residues 132–165 (VKESFKLGKEENAESASSSGTRASQGEKQQSGST) form a disordered region. Polar residues predominate over residues 145–165 (ESASSSGTRASQGEKQQSGST).

This sequence belongs to the Tim44 family. Probable component of the PAM complex at least composed of a mitochondrial HSP70 protein, TIMM44 and TIMM14. The complex interacts with the TIMM23 component of the TIM17:23 complex. Expressed in roots, flowers, young cotyledons and leaves.

It is found in the mitochondrion inner membrane. Essential component of the PAM complex, a complex required for the translocation of transit peptide-containing proteins from the inner membrane into the mitochondrial matrix in an ATP-dependent manner. Recruits mitochondrial HSP70 to drive protein translocation into the matrix using ATP as an energy source. The chain is Mitochondrial import inner membrane translocase subunit TIM44-1 (TIM44-1) from Arabidopsis thaliana (Mouse-ear cress).